An 876-amino-acid chain; its full sequence is Paramyosin (876 aa).

The interval Met-1–Asp-28 is nonhelical region. The stretch at Leu-29–Thr-855 forms a coiled coil. Positions Thr-856–Tyr-876 are nonhelical region.

It belongs to the paramyosin family. In terms of assembly, homodimer.

The protein resides in the cytoplasm. Its subcellular location is the myofibril. Functionally, paramyosin is a major structural component of many thick filaments isolated from invertebrate muscles. The protein is Paramyosin of Sarcoptes scabiei (Itch mite).